The following is a 504-amino-acid chain: Maturase K (504 aa).

Belongs to the intron maturase 2 family. MatK subfamily.

It localises to the plastid. Its subcellular location is the chloroplast. In terms of biological role, usually encoded in the trnK tRNA gene intron. Probably assists in splicing its own and other chloroplast group II introns. The polypeptide is Maturase K (Cardamine amara (Large bitter-cress)).